The chain runs to 496 residues: E3 ubiquitin-protein ligase CBL-C (496 aa).

A 4H region spans residues 7–144 (PRGWQRGEPR…SALFPAGKYC (138 aa)). A Cbl-PTB domain is found at 7-320 (PRGWQRGEPR…GKKHNPDLTE (314 aa)). The interval 145–217 (GHLYQLTKGS…FEFDVFTRLF (73 aa)) is EF-hand-like. Ca(2+) is bound by residues Asp198, Thr200, Asn202, and Glu209. The SH2-like stretch occupies residues 218–320 (QPWPTLLRNW…GKKHNPDLTE (103 aa)). Arg263 is a 4-O-phospho-L-tyrosine binding site. Positions 321-349 (LCRVEPYQRIQVSEEQLLLYQAMNSTFQL) are linker. Tyr340 carries the phosphotyrosine; by SRC modification. The RING-type zinc finger occupies 350 to 389 (CKICAERDKDVRIEPCGHLLCSCCLAAWQDSDSQTCPFCR). An interaction with RET region spans residues 350 to 494 (CKICAERDKD…RPRAREEATE (145 aa)). The tract at residues 432–453 (PVIPSAPSLLPEDQFPQGPQDK) is disordered.

As to quaternary structure, interacts with Ubiquitin-conjugating enzyme E2 UBE2D2 and UBE2D3. Isoform 1 interacts with EGFR (tyrosine phosphorylated). Interacts with the SH3 domain proteins LYN and CRK. Interacts (via RING-type zinc finger) with TGFB1I1 (via LIM zinc-binding domain 2); the interaction is direct and enhances the E3 activity. Interacts directly with RET (inactive) and CD2AP; dissociates from RET upon RET activation by GDNF which also increases the interaction with CD2AP suggesting dissociation as CBLC:CD2AP complex. Interacts with SRC; the interaction is enhanced when SRC is phosphorylated at 'Tyr-419'. Post-translationally, phosphorylated on tyrosines by EGFR. Phosphorylated on multiple tyrosine residues by SRC. Isoform 1, but not isoform 2, is phosphorylated on tyrosines by EGFR. In terms of processing, autoubiquitinated, when phosphorylated at Tyr-340. Widely expressed in tissues, where the expression is restricted to epithelial cells (at protein level).

It carries out the reaction S-ubiquitinyl-[E2 ubiquitin-conjugating enzyme]-L-cysteine + [acceptor protein]-L-lysine = [E2 ubiquitin-conjugating enzyme]-L-cysteine + N(6)-ubiquitinyl-[acceptor protein]-L-lysine.. Its activity is regulated as follows. Phosphorylation at Tyr-340 is necessary and sufficient for the activation of E3 activity. In terms of biological role, acts as an E3 ubiquitin-protein ligase, which accepts ubiquitin from specific E2 ubiquitin-conjugating enzymes, and then transfers it to substrates promoting their degradation by the proteasome. Functionally coupled with the E2 ubiquitin-protein ligases UB2D1, UB2D2 and UB2D3. Regulator of EGFR mediated signal transduction; upon EGF activation, ubiquitinates EGFR. Isoform 1, but not isoform 2, inhibits EGF stimulated MAPK1 activation. Promotes ubiquitination of SRC phosphorylated at 'Tyr-424', has the highest ubiquitin ligase activity among CBL family proteins. In collaboration with CD2AP may act as regulatory checkpoint for Ret signaling by modulating the rate of RET degradation after ligand activation; CD2AP converts it from an inhibitor to a promoter of RET degradation; the function limits the potency of GDNF on neuronal survival. The chain is E3 ubiquitin-protein ligase CBL-C (Cblc) from Mus musculus (Mouse).